We begin with the raw amino-acid sequence, 203 residues long: Probable deoxycytidylate deaminase (203 aa).

The CMP/dCMP-type deaminase domain maps to 27 to 163 (HWDDYFMATS…PTYRASKRML (137 aa)). Residue His-102 participates in Zn(2+) binding. Glu-104 serves as the catalytic Proton donor. Residues Cys-128 and Cys-131 each coordinate Zn(2+).

Belongs to the cytidine and deoxycytidylate deaminase family. It depends on Zn(2+) as a cofactor.

The enzyme catalyses dCMP + H2O + H(+) = dUMP + NH4(+). Its function is as follows. Supplies the nucleotide substrate for thymidylate synthetase. The chain is Probable deoxycytidylate deaminase from Drosophila melanogaster (Fruit fly).